A 455-amino-acid chain; its full sequence is Glutamyl-tRNA reductase (455 aa).

Substrate contacts are provided by residues 49 to 52, Ser109, 114 to 116, and Gln120; these read TCNR and ETQ. Cys50 (nucleophile) is an active-site residue. 189-194 is an NADP(+) binding site; sequence GAGKMG.

This sequence belongs to the glutamyl-tRNA reductase family. In terms of assembly, homodimer.

The enzyme catalyses (S)-4-amino-5-oxopentanoate + tRNA(Glu) + NADP(+) = L-glutamyl-tRNA(Glu) + NADPH + H(+). Its pathway is porphyrin-containing compound metabolism; protoporphyrin-IX biosynthesis; 5-aminolevulinate from L-glutamyl-tRNA(Glu): step 1/2. In terms of biological role, catalyzes the NADPH-dependent reduction of glutamyl-tRNA(Glu) to glutamate 1-semialdehyde (GSA). The sequence is that of Glutamyl-tRNA reductase from Bacillus velezensis (strain DSM 23117 / BGSC 10A6 / LMG 26770 / FZB42) (Bacillus amyloliquefaciens subsp. plantarum).